We begin with the raw amino-acid sequence, 127 residues long: Major sperm protein 49 (127 aa).

The residue at position 2 (Ala2) is an N-acetylalanine. One can recognise an MSP domain in the interval 9–126 (DIQTQPGTKI…RRKNLPIEYN (118 aa)).

In terms of tissue distribution, sperm.

It is found in the cell projection. Its subcellular location is the pseudopodium. It localises to the cytoplasm. The protein resides in the cytoskeleton. Functionally, central component in molecular interactions underlying sperm crawling. Forms an extensive filament system that extends from sperm villipoda, along the leading edge of the pseudopod. The sequence is that of Major sperm protein 49 (msp-49) from Caenorhabditis elegans.